The sequence spans 210 residues: ATP phosphoribosyltransferase (210 aa).

The protein belongs to the ATP phosphoribosyltransferase family. Short subfamily. Heteromultimer composed of HisG and HisZ subunits.

It localises to the cytoplasm. The catalysed reaction is 1-(5-phospho-beta-D-ribosyl)-ATP + diphosphate = 5-phospho-alpha-D-ribose 1-diphosphate + ATP. Its pathway is amino-acid biosynthesis; L-histidine biosynthesis; L-histidine from 5-phospho-alpha-D-ribose 1-diphosphate: step 1/9. Its function is as follows. Catalyzes the condensation of ATP and 5-phosphoribose 1-diphosphate to form N'-(5'-phosphoribosyl)-ATP (PR-ATP). Has a crucial role in the pathway because the rate of histidine biosynthesis seems to be controlled primarily by regulation of HisG enzymatic activity. The chain is ATP phosphoribosyltransferase from Petrotoga mobilis (strain DSM 10674 / SJ95).